The following is a 185-amino-acid chain: Peptide deformylase (185 aa).

Positions 94 and 136 each coordinate Fe cation. Glutamate 137 is an active-site residue. A Fe cation-binding site is contributed by histidine 140.

The protein belongs to the polypeptide deformylase family. It depends on Fe(2+) as a cofactor.

It carries out the reaction N-terminal N-formyl-L-methionyl-[peptide] + H2O = N-terminal L-methionyl-[peptide] + formate. Removes the formyl group from the N-terminal Met of newly synthesized proteins. Requires at least a dipeptide for an efficient rate of reaction. N-terminal L-methionine is a prerequisite for activity but the enzyme has broad specificity at other positions. This Chlorobium limicola (strain DSM 245 / NBRC 103803 / 6330) protein is Peptide deformylase.